Consider the following 424-residue polypeptide: Calreticulin (424 aa).

The first 19 residues, 1-19 (MRLLLCLIFLVFVFNFALS), serve as a signal peptide directing secretion. A disulfide bridge links Cys105 with Cys137. 4 residues coordinate an alpha-D-glucoside: Tyr109, Lys111, Tyr128, and Asp135. 7 consecutive repeat copies span residues 191-202 (IQAGNLADDWEL), 210-221 (DPKQSKPVDWVD), 227-238 (DPEDVKPAGHDD), 246-256 (PEAVKPEDWNE), 260-270 (GEWEAPTIANP), 274-284 (GEWKAKKIPNP), and 288-298 (GEWVHPLIDNP). Residues 191 to 256 (IQAGNLADDW…EAVKPEDWNE (66 aa)) are 4 X 12 AA approximate repeats. Positions 260–298 (GEWEAPTIANPEYKGEWKAKKIPNPEYKGEWVHPLIDNP) are 3 X 11 AA approximate repeats. Glu318 is a binding site for an alpha-D-glucoside. The segment covering 370-385 (RKKADEKLAAEKAAEK) has biased composition (basic and acidic residues). Residues 370-424 (RKKADEKLAAEKAAEKEAEEADEEEEEVAEEDLVKTDDKKEEVKKSTKKVDHDEL) form a disordered region. Residues 386–400 (EAEEADEEEEEVAEE) show a composition bias toward acidic residues. The span at 401 to 424 (DLVKTDDKKEEVKKSTKKVDHDEL) shows a compositional bias: basic and acidic residues. The Prevents secretion from ER motif lies at 421 to 424 (HDEL).

This sequence belongs to the calreticulin family.

It is found in the endoplasmic reticulum lumen. Its function is as follows. Molecular calcium-binding chaperone promoting folding, oligomeric assembly and quality control in the ER via the calreticulin/calnexin cycle. This lectin may interact transiently with almost all of the monoglucosylated glycoproteins that are synthesized in the ER. This is Calreticulin (crtA) from Dictyostelium discoideum (Social amoeba).